Here is a 155-residue protein sequence, read N- to C-terminus: Small ribosomal subunit protein uS7 (155 aa).

It belongs to the universal ribosomal protein uS7 family. In terms of assembly, part of the 30S ribosomal subunit. Contacts proteins S9 and S11.

Its function is as follows. One of the primary rRNA binding proteins, it binds directly to 16S rRNA where it nucleates assembly of the head domain of the 30S subunit. Is located at the subunit interface close to the decoding center, probably blocks exit of the E-site tRNA. The polypeptide is Small ribosomal subunit protein uS7 (Chlorobium chlorochromatii (strain CaD3)).